A 157-amino-acid chain; its full sequence is MTASNRRGSTHRNSVTQLNKVLPVPIQLEDETSSGHFNSTSHITDVLVGDYHVIQGEGGSSYVVWSIRIIVDDSVYSSMVIYKRYSDIQRFREALLEHYPNTEIPPLPPKDNFSFQRLSMSDYWLENRRKGLQWFMTNVMLNPKHQHSPVITHFILN.

The 115-residue stretch at Ile43–Asn157 folds into the PX domain.

It belongs to the YPT35 family.

It is found in the endosome membrane. The protein localises to the vacuole membrane. Its function is as follows. Recruits the lipid transfer protein VPS13 to endosomal and vacuolar membranes. This chain is Endosomal/vacuolar adapter protein YPT35 (YPT35), found in Debaryomyces hansenii (strain ATCC 36239 / CBS 767 / BCRC 21394 / JCM 1990 / NBRC 0083 / IGC 2968) (Yeast).